We begin with the raw amino-acid sequence, 334 residues long: MLALGKLLELTLAGREPAQKIQLTVDGVQMRWLSEGALEVRPPEARDNGSDLLLSSGIHGNETAPIELLDRLLHGIARGEIKPRSRVLFLFGNTEAMRRGERYLELDVNRLFNGRHEKNIGPEAMRAAELEQLARSFFSLPGRSRLHYDLHTAIRGSKIEQFALYPWKEGRQHSRHQLARLNAAGMQAVLLQNKTSITFTAFTYEQLEAEAFTLELGKARPFGQNQGVNVSRLELRLKQIIEGTEPETDSLDGLKLFAVSREVIKHSDAFLLHLPADVENFSELEKGYLLAEDVAKTRWVIEEEGARIIFPNPKVKNGLRAGILIVPTTDAVLG.

The Zn(2+) site is built by His-59, Glu-62, and His-151. Residue Glu-215 is part of the active site.

The protein belongs to the AspA/AstE family. Succinylglutamate desuccinylase subfamily. Zn(2+) serves as cofactor.

The enzyme catalyses N-succinyl-L-glutamate + H2O = L-glutamate + succinate. The protein operates within amino-acid degradation; L-arginine degradation via AST pathway; L-glutamate and succinate from L-arginine: step 5/5. In terms of biological role, transforms N(2)-succinylglutamate into succinate and glutamate. The chain is Succinylglutamate desuccinylase from Pseudomonas fluorescens (strain SBW25).